The chain runs to 115 residues: NADH-ubiquinone oxidoreductase chain 3 (115 aa).

The next 3 membrane-spanning stretches (helical) occupy residues 3–23, 55–75, and 84–104; these read FMLTLLTNTLLALLLVTIAFW, FFLVAITFLLFDLEIALLLPL, and LEVMLTTALLLISLLAISLAY.

Belongs to the complex I subunit 3 family. As to quaternary structure, core subunit of respiratory chain NADH dehydrogenase (Complex I) which is composed of 45 different subunits. Interacts with TMEM186. Interacts with TMEM242.

Its subcellular location is the mitochondrion inner membrane. The catalysed reaction is a ubiquinone + NADH + 5 H(+)(in) = a ubiquinol + NAD(+) + 4 H(+)(out). In terms of biological role, core subunit of the mitochondrial membrane respiratory chain NADH dehydrogenase (Complex I) which catalyzes electron transfer from NADH through the respiratory chain, using ubiquinone as an electron acceptor. Essential for the catalytic activity of complex I. The protein is NADH-ubiquinone oxidoreductase chain 3 of Rhinolophus pumilus (Horseshoe bat).